The primary structure comprises 305 residues: UDP-3-O-acyl-N-acetylglucosamine deacetylase (305 aa).

Zn(2+)-binding residues include His-78, His-237, and Asp-241. His-264 (proton donor) is an active-site residue.

This sequence belongs to the LpxC family. Zn(2+) serves as cofactor.

The enzyme catalyses a UDP-3-O-[(3R)-3-hydroxyacyl]-N-acetyl-alpha-D-glucosamine + H2O = a UDP-3-O-[(3R)-3-hydroxyacyl]-alpha-D-glucosamine + acetate. It participates in glycolipid biosynthesis; lipid IV(A) biosynthesis; lipid IV(A) from (3R)-3-hydroxytetradecanoyl-[acyl-carrier-protein] and UDP-N-acetyl-alpha-D-glucosamine: step 2/6. In terms of biological role, catalyzes the hydrolysis of UDP-3-O-myristoyl-N-acetylglucosamine to form UDP-3-O-myristoylglucosamine and acetate, the committed step in lipid A biosynthesis. This Burkholderia mallei (strain NCTC 10247) protein is UDP-3-O-acyl-N-acetylglucosamine deacetylase.